The sequence spans 352 residues: C-C chemokine receptor type 5 (352 aa).

Residues 1-30 lie on the Extracellular side of the membrane; that stretch reads MDYQVSSPTYDIDYYTSEPCQKINVKQIAG. At Y3 the chain carries Sulfotyrosine. O-linked (GalNAc...) serine glycans are attached at residues S6 and S7. A sulfotyrosine mark is found at Y10, Y14, and Y15. 2 disulfide bridges follow: C20–C269 and C101–C178. Residues 31–58 traverse the membrane as a helical segment; it reads RLLPPLYSLVFIFGFVGNILVVLILINC. At 59–68 the chain is on the cytoplasmic side; it reads KRLKSMTDIY. A helical transmembrane segment spans residues 69-89; the sequence is LLNLAISDLLFLLTVPFWAHY. Residues 90 to 102 lie on the Extracellular side of the membrane; the sequence is AAAQWDFGNTMCQ. Residues 103–124 traverse the membrane as a helical segment; that stretch reads LLTGLYFIGFFSGIFFIILLTI. Over 125–141 the chain is Cytoplasmic; the sequence is DRYLAIVHAVFALKART. The chain crosses the membrane as a helical span at residues 142-166; that stretch reads VTFGVVTSVITWVVAVFASLPGIIF. At 167–198 the chain is on the extracellular side; that stretch reads TRSQREGLHYTCSSHFPYSQYQFWKNFQTLKI. The helical transmembrane segment at 199-218 threads the bilayer; it reads VILGLVLPLLVMVICYSGIL. The Cytoplasmic portion of the chain corresponds to 219–235; that stretch reads KTLLRCRNEKKRHRAVR. Residues 236–260 form a helical membrane-spanning segment; the sequence is LIFTIMIVYFLFWAPYNIVLLLNTF. Residues 261-277 are Extracellular-facing; it reads QEFFGLNNCSSSNRLDQ. A helical transmembrane segment spans residues 278–301; that stretch reads AMQVTETLGMTHCCINPIIYAFVG. The Cytoplasmic portion of the chain corresponds to 302 to 352; that stretch reads EKFRNYLLVFFQKHIAKRFCKCCSIFQQEAPERASSVYTRSTGEQEISVGL. S-palmitoyl cysteine attachment occurs at residues C321, C323, and C324. S336, S337, S342, and S349 each carry phosphoserine; by BARK1.

It belongs to the G-protein coupled receptor 1 family. Interacts with PRAF2. Efficient ligand binding to CCL3/MIP-1alpha and CCL4/MIP-1beta requires sulfation, O-glycosylation and sialic acid modifications. Glycosylation on Ser-6 is required for efficient binding of CCL4. Interacts with GRK2. Interacts with ARRB1 and ARRB2. Interacts with CNIH4. Interacts with S100A4; this interaction stimulates T-lymphocyte chemotaxis. In terms of processing, sulfated on at least 2 of the N-terminal tyrosines. Sulfation is required for efficient binding of the chemokines, CCL3 and CCL4. Palmitoylation in the C-terminal is important for cell surface expression. Post-translationally, phosphorylation on serine residues in the C-terminal is stimulated by binding CC chemokines especially by APO-RANTES. In terms of processing, O-glycosylated, but not N-glycosylated. Ser-6 appears to be the major site even if Ser-7 may be also O-glycosylated. Also sialylated glycans present which contribute to chemokine binding. Thr-16 and Ser-17 may also be glycosylated and, if so, with small moieties such as a T-antigen.

It is found in the cell membrane. Functionally, receptor for a number of inflammatory CC-chemokines including CCL3/MIP-1-alpha, CCL4/MIP-1-beta and RANTES and subsequently transduces a signal by increasing the intracellular calcium ion level. May play a role in the control of granulocytic lineage proliferation or differentiation. Participates in T-lymphocyte migration to the infection site by acting as a chemotactic receptor. This Theropithecus gelada (Gelada baboon) protein is C-C chemokine receptor type 5 (CCR5).